A 414-amino-acid chain; its full sequence is Wilms tumor protein homolog A (414 aa).

Glycyl lysine isopeptide (Lys-Gly) (interchain with G-Cter in SUMO) cross-links involve residues K55 and K158. Positions 217-225 (MTWNQMNLG) match the 9aaTAD motif. 3 consecutive C2H2-type zinc fingers follow at residues 288–312 (FMCA…SRKH), 318–342 (YQCD…QRRH), and 348–370 (FQCK…TRTH). Important for interaction with target DNA stretches follow at residues 332–346 (SDQL…TGIK) and 358–366 (SRSDHLKTH). Residues 373 to 375 (KTS) carry the KTS motif motif. The C2H2-type 4 zinc finger occupies 379–403 (FSCRWPSCQKKFARSDELVRHHNMH).

It belongs to the EGR C2H2-type zinc-finger protein family. As to expression, expressed around the pronephric anlage and in the pronephros; expression is restricted to the splanchnic mesoderm (the site where the glomus forms) from tailbud stages, and the glomus of early tadpoles. Not expressed in the pronephric tubules or pronephric duct. In tadpoles (stage 38-39), additional expression begins in the heart. Also expressed in the adult kidney (mesonephros).

Its subcellular location is the nucleus. It localises to the cytoplasm. The protein localises to the nucleus speckle. Its function is as follows. Transcription factor required for development of the vascular component of the pronephric kidney, the glomus; may repress tubule-specific gene expression in the portion of the pronephros fated to form the glomus. Recognizes and binds to the DNA sequence 5'-GCG(T/G)GGGCG-3'. Inhibits Wnt-signaling during embryonic development. Function may be isoform-specific: the isoform containing the KTS motif is less effective in inhibiting wnt signaling. The chain is Wilms tumor protein homolog A (wt1-a) from Xenopus laevis (African clawed frog).